Reading from the N-terminus, the 94-residue chain is UPF0235 protein Dred_0717 (94 aa).

The protein belongs to the UPF0235 family.

The sequence is that of UPF0235 protein Dred_0717 from Desulforamulus reducens (strain ATCC BAA-1160 / DSM 100696 / MI-1) (Desulfotomaculum reducens).